The chain runs to 51 residues: Sec-independent protein translocase protein TatA (51 aa).

The helical transmembrane segment at 1–21 threads the bilayer; it reads MGMSFSHLLIILLIIFVLFGA.

It belongs to the TatA/E family. In terms of assembly, the Tat system comprises two distinct complexes: a TatABC complex, containing multiple copies of TatA, TatB and TatC subunits, and a separate TatA complex, containing only TatA subunits. Substrates initially bind to the TatABC complex, which probably triggers association of the separate TatA complex to form the active translocon.

The protein localises to the cell inner membrane. Its function is as follows. Part of the twin-arginine translocation (Tat) system that transports large folded proteins containing a characteristic twin-arginine motif in their signal peptide across membranes. TatA could form the protein-conducting channel of the Tat system. This chain is Sec-independent protein translocase protein TatA, found in Rickettsia bellii (strain RML369-C).